A 359-amino-acid chain; its full sequence is 1-deoxy-D-xylulose 5-phosphate reductoisomerase (359 aa).

NADPH contacts are provided by Thr-12, Gly-13, Ser-14, Ile-15, Lys-38, and Asn-39. Position 105 (Lys-105) interacts with 1-deoxy-D-xylulose 5-phosphate. Residue Glu-106 participates in NADPH binding. Residue Asp-130 coordinates Mn(2+). Residues Ser-131, Glu-132, Ser-152, and His-175 each contribute to the 1-deoxy-D-xylulose 5-phosphate site. Glu-132 contributes to the Mn(2+) binding site. Residue Gly-181 participates in NADPH binding. 4 residues coordinate 1-deoxy-D-xylulose 5-phosphate: Ser-188, Asn-193, Lys-194, and Glu-197. Residue Glu-197 participates in Mn(2+) binding.

It belongs to the DXR family. The cofactor is Mg(2+). It depends on Mn(2+) as a cofactor.

It carries out the reaction 2-C-methyl-D-erythritol 4-phosphate + NADP(+) = 1-deoxy-D-xylulose 5-phosphate + NADPH + H(+). Its pathway is isoprenoid biosynthesis; isopentenyl diphosphate biosynthesis via DXP pathway; isopentenyl diphosphate from 1-deoxy-D-xylulose 5-phosphate: step 1/6. Catalyzes the NADPH-dependent rearrangement and reduction of 1-deoxy-D-xylulose-5-phosphate (DXP) to 2-C-methyl-D-erythritol 4-phosphate (MEP). The polypeptide is 1-deoxy-D-xylulose 5-phosphate reductoisomerase (Pseudothermotoga lettingae (strain ATCC BAA-301 / DSM 14385 / NBRC 107922 / TMO) (Thermotoga lettingae)).